The chain runs to 20 residues: Agglutinin beta-4 chain (20 aa).

Belongs to the jacalin lectin family. In terms of assembly, tetramer of four alpha chains associated with two or four beta chains.

D-galactose-specific lectin, binds the T-antigen structure Gal-beta1,3-GalNAc (Thomsen-Friedenreich-antigen-specific lectin). Potent and selective stimulant of distinct T- and B-cell functions. Shows a unique ability to specifically recognize IgA-1 from human serum. In Artocarpus integer (Jack fruit), this protein is Agglutinin beta-4 chain.